Consider the following 284-residue polypeptide: uncharacterized protein (284 aa).

The signal sequence occupies residues 1–24 (MLYSRESRTTVLFLALVTSLTVLC). The Cytoplasmic portion of the chain corresponds to 25–84 (HSVDVTTVFTTSTITEITTVTAAPQPQNKAETALNTATNIIQTMQFLFNCAPFKWKGPLK). The chain crosses the membrane as a helical span at residues 85–104 (ITSCALNFIVLLLTAWGYLL). Over 105–284 (KYLQENKLNS…SVHMYSSSLL (180 aa)) the chain is Extracellular. Residue Asn-270 is glycosylated (N-linked (GlcNAc...) asparagine).

This sequence to yeast YNL019c.

Its subcellular location is the cell membrane. This is an uncharacterized protein from Saccharomyces cerevisiae (strain ATCC 204508 / S288c) (Baker's yeast).